Consider the following 367-residue polypeptide: Septin-1 (367 aa).

The Septin-type G domain occupies 22–296 (KGFDFTLMVA…EGYRARCLQS (275 aa)). The segment at 32 to 39 (GESGLGKS) is G1 motif. Residues 32 to 39 (GESGLGKS), threonine 66, glycine 92, and 171 to 179 (KADALMPKE) each bind GTP. The interval 89-92 (DTPG) is G3 motif. The segment at 170 to 173 (GKAD) is G4 motif. A Phosphoserine modification is found at serine 206. Residues glycine 229 and arginine 245 each contribute to the GTP site. Position 248 is a phosphoserine; by AURKB (serine 248). Threonine 251 bears the Phosphothreonine mark. Phosphoserine; by AURKB is present on residues serine 307 and serine 315.

It belongs to the TRAFAC class TrmE-Era-EngA-EngB-Septin-like GTPase superfamily. Septin GTPase family. Septins polymerize into heterooligomeric protein complexes that form filaments, and can associate with cellular membranes, actin filaments and microtubules. GTPase activity is required for filament formation. Interacts with AURKB.

The protein resides in the cytoplasm. It is found in the cytoskeleton. Its subcellular location is the microtubule organizing center. The protein localises to the centrosome. It localises to the midbody. Filament-forming cytoskeletal GTPase. May play a role in cytokinesis (Potential). This chain is Septin-1, found in Bos taurus (Bovine).